The chain runs to 295 residues: Indole-3-glycerol phosphate synthase (295 aa).

This sequence belongs to the TrpC family.

The catalysed reaction is 1-(2-carboxyphenylamino)-1-deoxy-D-ribulose 5-phosphate + H(+) = (1S,2R)-1-C-(indol-3-yl)glycerol 3-phosphate + CO2 + H2O. It participates in amino-acid biosynthesis; L-tryptophan biosynthesis; L-tryptophan from chorismate: step 4/5. The sequence is that of Indole-3-glycerol phosphate synthase from Prochlorococcus marinus (strain MIT 9301).